A 386-amino-acid chain; its full sequence is Phosphoglycerate kinase (386 aa).

Substrate is bound by residues 21–23, arginine 36, 59–62, arginine 112, and arginine 145; these read DLN and HLGR. Residues lysine 196, glutamate 313, and 339 to 342 contribute to the ATP site; that span reads GGDT.

It belongs to the phosphoglycerate kinase family. In terms of assembly, monomer.

The protein localises to the cytoplasm. It carries out the reaction (2R)-3-phosphoglycerate + ATP = (2R)-3-phospho-glyceroyl phosphate + ADP. Its pathway is carbohydrate degradation; glycolysis; pyruvate from D-glyceraldehyde 3-phosphate: step 2/5. The polypeptide is Phosphoglycerate kinase (Haemophilus influenzae (strain PittEE)).